The primary structure comprises 119 residues: Methylglyoxal synthase (119 aa).

One can recognise an MGS-like domain in the interval 1–119 (MRIALIAHDK…GTADLIIRQF (119 aa)). Residues His8, Lys12, 34-37 (TGTT), and 54-55 (SG) contribute to the substrate site. Asp60 serves as the catalytic Proton donor/acceptor. His87 serves as a coordination point for substrate.

Belongs to the methylglyoxal synthase family.

It catalyses the reaction dihydroxyacetone phosphate = methylglyoxal + phosphate. Catalyzes the formation of methylglyoxal from dihydroxyacetone phosphate. The sequence is that of Methylglyoxal synthase from Clostridium botulinum (strain Alaska E43 / Type E3).